The following is a 291-amino-acid chain: Glycolipid transfer protein domain-containing protein 2 (291 aa).

N276 carries an N-linked (GlcNAc...) asparagine glycan.

This sequence belongs to the GLTP family.

In Homo sapiens (Human), this protein is Glycolipid transfer protein domain-containing protein 2 (GLTPD2).